The primary structure comprises 879 residues: Oxysterol-binding protein-related protein 5 (879 aa).

The segment at 1 to 73 (MKEEAFLRRR…TPSSATKVPP (73 aa)) is disordered. Residue serine 12 is modified to Phosphoserine. The stretch at 93-123 (VTKKETLKAQKENYRQEKKRATRQLLSALTD) forms a coiled coil. The PH domain occupies 126 to 243 (VVIMADSLKI…WLDALELALR (118 aa)). Residues 254-341 (KPGRDGEPGT…TPGAPVRRGT (88 aa)) are disordered. Basic and acidic residues-rich tracts occupy residues 300-309 (FSDKSERENP) and 316-325 (TQDHSRKTES). A 1,2-diacyl-sn-glycero-3-phospho-(1D-myo-inositol 4-phosphate) contacts are provided by residues 384-389 (LSRVVL), 446-449 (KPYN), and 478-479 (HH). Residues 384-389 (LSRVVL) and asparagine 449 contribute to the a 1,2-diacyl-sn-glycero-3-phospho-L-serine site. Residue serine 504 coordinates a 1,2-diacyl-sn-glycero-3-phospho-L-serine. 3 residues coordinate a 1,2-diacyl-sn-glycero-3-phospho-(1D-myo-inositol 4-phosphate): lysine 670, glutamate 674, and arginine 678. The interval 742 to 806 (TTFLGSPGPR…FVPGGESPCP (65 aa)) is disordered. Residue serine 747 is modified to Phosphoserine. Basic and acidic residues predominate over residues 750–765 (PRHERSGPDQRLRKAS). Polar residues predominate over residues 766–783 (DQPSGHSQATESSGSTPE). The chain crosses the membrane as a helical span at residues 860–878 (SWFLLCVFLACQLFINHIL).

It belongs to the OSBP family. Ubiquitously expressed.

It localises to the endoplasmic reticulum membrane. Lipid transporter involved in lipid countertransport between the endoplasmic reticulum and the plasma membrane: specifically exchanges phosphatidylserine with phosphatidylinositol 4-phosphate (PI4P), delivering phosphatidylserine to the plasma membrane in exchange for PI4P, which is degraded by the SAC1/SACM1L phosphatase in the endoplasmic reticulum. Binds phosphatidylserine and PI4P in a mutually exclusive manner. May cooperate with NPC1 to mediate the exit of cholesterol from endosomes/lysosomes. Binds 25-hydroxycholesterol and cholesterol. The sequence is that of Oxysterol-binding protein-related protein 5 (OSBPL5) from Homo sapiens (Human).